The primary structure comprises 166 residues: Large ribosomal subunit protein uL10 (166 aa).

The protein belongs to the universal ribosomal protein uL10 family. In terms of assembly, part of the ribosomal stalk of the 50S ribosomal subunit. The N-terminus interacts with L11 and the large rRNA to form the base of the stalk. The C-terminus forms an elongated spine to which L12 dimers bind in a sequential fashion forming a multimeric L10(L12)X complex.

In terms of biological role, forms part of the ribosomal stalk, playing a central role in the interaction of the ribosome with GTP-bound translation factors. The sequence is that of Large ribosomal subunit protein uL10 from Limosilactobacillus reuteri (strain DSM 20016) (Lactobacillus reuteri).